The primary structure comprises 669 residues: Cytokinesis protein 2 (669 aa).

In terms of domain architecture, F-BAR spans 1–261 (MSYSYEACFW…HLNSFTAADE (261 aa)). A coiled-coil region spans residues 134–200 (KKGCEVLQKK…LKQEYKASQK (67 aa)). A phosphoserine mark is found at serine 337 and serine 366. The interval 372-518 (VQLQSNVDDS…DYNTRRDTST (147 aa)) is disordered. Composition is skewed to basic and acidic residues over residues 381–391 (SVLRQKPDKPR) and 397–413 (EQLK…EKGL). Serine 421 carries the post-translational modification Phosphoserine. 2 stretches are compositionally biased toward low complexity: residues 421-431 (SLSSPSESSSS) and 445-455 (MESMTTSVSSM). One can recognise an SH3 domain in the interval 599–667 (PVIEYAKAMY…PYNFIQLLHQ (69 aa)).

Interacts with INN1.

It localises to the cytoplasm. The protein localises to the cytoskeleton. The protein resides in the bud neck. Throughout most of the cell cycle it forms a double ring that coincides with the septins. After the onset of mitosis, forms a ring-like structure which colocalizes with the medial actin ring. Mediates cytoskeletal rearrangements required for cytokinesis. In conjunction with the medial actin ring exhibits contraction-like action. This Saccharomyces cerevisiae (strain ATCC 204508 / S288c) (Baker's yeast) protein is Cytokinesis protein 2 (HOF1).